A 189-amino-acid chain; its full sequence is MDWLLAGLGNPGAEYARTRHNAGFWTLQTLADRVGASLRMEKRWHCLAATARASGLELGLCMPQDFMNRSGGPVQAMAAFYKVAAERILVMHDELDLPPGAARLKRGGGHGGHNGLRDLDRALGTRDYWRLRIGIGHPGHKDAVIPYVLSAPPPADKTLIDEAIERSLGVLPDFLCGRTDAAQKSLHSD.

TRNA is bound at residue Tyr-15. His-20 acts as the Proton acceptor in catalysis. Phe-66, Asn-68, and Asn-114 together coordinate tRNA.

Belongs to the PTH family. Monomer.

The protein localises to the cytoplasm. It catalyses the reaction an N-acyl-L-alpha-aminoacyl-tRNA + H2O = an N-acyl-L-amino acid + a tRNA + H(+). Hydrolyzes ribosome-free peptidyl-tRNAs (with 1 or more amino acids incorporated), which drop off the ribosome during protein synthesis, or as a result of ribosome stalling. In terms of biological role, catalyzes the release of premature peptidyl moieties from peptidyl-tRNA molecules trapped in stalled 50S ribosomal subunits, and thus maintains levels of free tRNAs and 50S ribosomes. The protein is Peptidyl-tRNA hydrolase of Acidithiobacillus ferrooxidans (strain ATCC 23270 / DSM 14882 / CIP 104768 / NCIMB 8455) (Ferrobacillus ferrooxidans (strain ATCC 23270)).